A 102-amino-acid polypeptide reads, in one-letter code: Glutaredoxin 1 (102 aa).

The 96-residue stretch at 1–96 folds into the Glutaredoxin domain; sequence MNKAILHTII…KLLENQPKTT (96 aa). Residues Cys17 and Cys20 are joined by a disulfide bond.

The protein belongs to the glutaredoxin family. Monomer.

It is found in the cytoplasm. Has a glutathione-disulfide oxidoreductase activity in the presence of NADPH and glutathione reductase. Reduces low molecular weight disulfides and proteins. This Rickettsia conorii (strain ATCC VR-613 / Malish 7) protein is Glutaredoxin 1 (grxC1).